We begin with the raw amino-acid sequence, 76 residues long: ATP synthase subunit c (76 aa).

The next 2 helical transmembrane spans lie at 7 to 27 and 50 to 70; these read VATA…IGII and FIGI…AFLI.

This sequence belongs to the ATPase C chain family. In terms of assembly, F-type ATPases have 2 components, F(1) - the catalytic core - and F(0) - the membrane proton channel. F(1) has five subunits: alpha(3), beta(3), gamma(1), delta(1), epsilon(1). F(0) has four main subunits: a(1), b(1), b'(1) and c(10-14). The alpha and beta chains form an alternating ring which encloses part of the gamma chain. F(1) is attached to F(0) by a central stalk formed by the gamma and epsilon chains, while a peripheral stalk is formed by the delta, b and b' chains.

It localises to the cell membrane. Functionally, f(1)F(0) ATP synthase produces ATP from ADP in the presence of a proton or sodium gradient. F-type ATPases consist of two structural domains, F(1) containing the extramembraneous catalytic core and F(0) containing the membrane proton channel, linked together by a central stalk and a peripheral stalk. During catalysis, ATP synthesis in the catalytic domain of F(1) is coupled via a rotary mechanism of the central stalk subunits to proton translocation. Key component of the F(0) channel; it plays a direct role in translocation across the membrane. A homomeric c-ring of between 10-14 subunits forms the central stalk rotor element with the F(1) delta and epsilon subunits. The chain is ATP synthase subunit c from Chloroflexus aurantiacus (strain ATCC 29366 / DSM 635 / J-10-fl).